Here is a 308-residue protein sequence, read N- to C-terminus: Cytochrome b (308 aa).

4 consecutive transmembrane segments (helical) span residues 1–21, 45–66, 81–101, and 146–166; these read FGSLLGICLLTQIITGLLLAT, WLIRNLHANGASFFFICIYIHI, WNVGVILLLTLMATAFVGYVL, and FFALHFLLPFAITGLTLVHLT. Residues His-51 and His-65 each coordinate heme b. 2 residues coordinate heme b: His-150 and His-164. An a ubiquinone-binding site is contributed by His-169. Helical transmembrane passes span 194–214, 256–276, and 288–308; these read MKDILGFALMIIPLAALALFS, LGGVLALAASILVLFLIPLLH, and LSQILFWTLVANLLILTWVGS.

Belongs to the cytochrome b family. As to quaternary structure, the cytochrome bc1 complex contains 11 subunits: 3 respiratory subunits (MT-CYB, CYC1 and UQCRFS1), 2 core proteins (UQCRC1 and UQCRC2) and 6 low-molecular weight proteins (UQCRH/QCR6, UQCRB/QCR7, UQCRQ/QCR8, UQCR10/QCR9, UQCR11/QCR10 and a cleavage product of UQCRFS1). This cytochrome bc1 complex then forms a dimer. Heme b is required as a cofactor.

The protein resides in the mitochondrion inner membrane. Component of the ubiquinol-cytochrome c reductase complex (complex III or cytochrome b-c1 complex) that is part of the mitochondrial respiratory chain. The b-c1 complex mediates electron transfer from ubiquinol to cytochrome c. Contributes to the generation of a proton gradient across the mitochondrial membrane that is then used for ATP synthesis. The sequence is that of Cytochrome b (MT-CYB) from Ptiloprora plumbea (Leaden honeyeater).